Consider the following 160-residue polypeptide: MSDVENQPFFNIQRVYLKDMSLEQPNSPAIFLEQDMPSVEVEVDVKADRLAESVFEVVVSGTVTAKVKDKVAFLIEAKQAGIFDIRNIPDEQLDPLVGIACPTILFPYLRSNIADAITRAGFPPIHLAEINFQALYEQRLAQLQQQAGAAAGAPNGTTLN.

This sequence belongs to the SecB family. As to quaternary structure, homotetramer, a dimer of dimers. One homotetramer interacts with 1 SecA dimer.

Its subcellular location is the cytoplasm. Functionally, one of the proteins required for the normal export of preproteins out of the cell cytoplasm. It is a molecular chaperone that binds to a subset of precursor proteins, maintaining them in a translocation-competent state. It also specifically binds to its receptor SecA. This is Protein-export protein SecB from Burkholderia lata (strain ATCC 17760 / DSM 23089 / LMG 22485 / NCIMB 9086 / R18194 / 383).